The sequence spans 157 residues: 6,7-dimethyl-8-ribityllumazine synthase (157 aa).

5-amino-6-(D-ribitylamino)uracil contacts are provided by residues phenylalanine 22, 57–59 (AYE), and 81–83 (TVI). 86-87 (GT) is a (2S)-2-hydroxy-3-oxobutyl phosphate binding site. The Proton donor role is filled by histidine 89. 5-amino-6-(D-ribitylamino)uracil is bound at residue phenylalanine 114. Position 128 (arginine 128) interacts with (2S)-2-hydroxy-3-oxobutyl phosphate.

This sequence belongs to the DMRL synthase family. As to quaternary structure, forms an icosahedral capsid composed of 60 subunits, arranged as a dodecamer of pentamers.

It catalyses the reaction (2S)-2-hydroxy-3-oxobutyl phosphate + 5-amino-6-(D-ribitylamino)uracil = 6,7-dimethyl-8-(1-D-ribityl)lumazine + phosphate + 2 H2O + H(+). Its pathway is cofactor biosynthesis; riboflavin biosynthesis; riboflavin from 2-hydroxy-3-oxobutyl phosphate and 5-amino-6-(D-ribitylamino)uracil: step 1/2. In terms of biological role, catalyzes the formation of 6,7-dimethyl-8-ribityllumazine by condensation of 5-amino-6-(D-ribitylamino)uracil with 3,4-dihydroxy-2-butanone 4-phosphate. This is the penultimate step in the biosynthesis of riboflavin. The chain is 6,7-dimethyl-8-ribityllumazine synthase from Haemophilus influenzae (strain ATCC 51907 / DSM 11121 / KW20 / Rd).